The chain runs to 104 residues: Large ribosomal subunit protein uL24 (104 aa).

It belongs to the universal ribosomal protein uL24 family. Part of the 50S ribosomal subunit.

One of two assembly initiator proteins, it binds directly to the 5'-end of the 23S rRNA, where it nucleates assembly of the 50S subunit. Its function is as follows. One of the proteins that surrounds the polypeptide exit tunnel on the outside of the subunit. This is Large ribosomal subunit protein uL24 from Proteus mirabilis (strain HI4320).